A 332-amino-acid polypeptide reads, in one-letter code: UPF0194 membrane protein YbhG (332 aa).

A signal peptide spans M1–A16. Residues E108–A209 adopt a coiled-coil conformation.

The protein belongs to the UPF0194 family.

The protein resides in the periplasm. The protein is UPF0194 membrane protein YbhG of Shigella dysenteriae serotype 1 (strain Sd197).